Consider the following 377-residue polypeptide: uncharacterized protein (377 aa).

An ATP-binding site is contributed by 32–39 (GPINSGKT).

Belongs to the archaeal ATPase family.

This is an uncharacterized protein from Methanocaldococcus jannaschii (strain ATCC 43067 / DSM 2661 / JAL-1 / JCM 10045 / NBRC 100440) (Methanococcus jannaschii).